The primary structure comprises 718 residues: Phenylalanine--tRNA ligase beta subunit (718 aa).

A tRNA-binding domain is found at 39 to 153; sequence LNEISGIKFG…IFDLESNPLK (115 aa). A B5 domain is found at 386-460; sequence SKKTFLDLNY…RFYGLEKLKD (75 aa). Mg(2+) is bound by residues Asp438, Asp444, and Asp448.

Belongs to the phenylalanyl-tRNA synthetase beta subunit family. Type 1 subfamily. Tetramer of two alpha and two beta subunits. The cofactor is Mg(2+).

The protein resides in the cytoplasm. It carries out the reaction tRNA(Phe) + L-phenylalanine + ATP = L-phenylalanyl-tRNA(Phe) + AMP + diphosphate + H(+). In Mesomycoplasma hyopneumoniae (strain 7448) (Mycoplasma hyopneumoniae), this protein is Phenylalanine--tRNA ligase beta subunit.